Consider the following 216-residue polypeptide: uncharacterized protein (216 aa).

The chain crosses the membrane as a helical span at residues 39-59 (VLPLTFIGSLLILILTIVYYF). Residues 59–108 (FTLSGSVNELKNEISKEKSKKERLLSEIKRLEELKKTLETKKAIYEVVKI) adopt a coiled-coil conformation.

It localises to the membrane. This is an uncharacterized protein from Aquifex aeolicus (strain VF5).